Reading from the N-terminus, the 346-residue chain is [LysW]-lysine/[LysW]-ornithine hydrolase (346 aa).

Position 68 (H68) interacts with Zn(2+). The active site involves D70. D92 is a binding site for Zn(2+). E122 (proton acceptor) is an active-site residue. Residues E123, E146, and H317 each coordinate Zn(2+).

This sequence belongs to the peptidase M20A family. LysK subfamily. Zn(2+) is required as a cofactor. Co(2+) serves as cofactor.

Its subcellular location is the cytoplasm. It catalyses the reaction [amino-group carrier protein]-C-terminal-gamma-(L-lysyl)-L-glutamate + H2O = [amino-group carrier protein]-C-terminal-L-glutamate + L-lysine. The enzyme catalyses [amino-group carrier protein]-C-terminal-gamma-(L-ornithyl)-L-glutamate + H2O = [amino-group carrier protein]-C-terminal-L-glutamate + L-ornithine. It functions in the pathway amino-acid biosynthesis; L-lysine biosynthesis via AAA pathway; L-lysine from L-alpha-aminoadipate (Thermus route): step 5/5. Its pathway is amino-acid biosynthesis; L-arginine biosynthesis. Its function is as follows. Catalyzes the release of L-lysine from [LysW]-gamma-L-lysine and the release of L-ornithine from [LysW]-L-ornithine. This Saccharolobus solfataricus (strain ATCC 35092 / DSM 1617 / JCM 11322 / P2) (Sulfolobus solfataricus) protein is [LysW]-lysine/[LysW]-ornithine hydrolase.